Reading from the N-terminus, the 119-residue chain is Basic phospholipase A2 homolog 1 (119 aa).

7 disulfide bridges follow: cysteine 11/cysteine 72, cysteine 27/cysteine 118, cysteine 29/cysteine 45, cysteine 44/cysteine 99, cysteine 51/cysteine 92, cysteine 61/cysteine 85, and cysteine 79/cysteine 90. Positions 107 to 117 are important for membrane-damaging activities in eukaryotes and bacteria; heparin-binding; that stretch reads KENYNIDPKKR.

This sequence belongs to the phospholipase A2 family. Group I subfamily. D49 sub-subfamily. In terms of tissue distribution, expressed by the venom gland.

It is found in the secreted. In Notechis scutatus scutatus (Mainland tiger snake), this protein is Basic phospholipase A2 homolog 1.